We begin with the raw amino-acid sequence, 150 residues long: Flagellar assembly factor FliW (150 aa).

This sequence belongs to the FliW family. As to quaternary structure, interacts with translational regulator CsrA and flagellin(s).

It localises to the cytoplasm. Functionally, acts as an anti-CsrA protein, binds CsrA and prevents it from repressing translation of its target genes, one of which is flagellin. Binds to flagellin and participates in the assembly of the flagellum. This Leptospira borgpetersenii serovar Hardjo-bovis (strain L550) protein is Flagellar assembly factor FliW.